A 436-amino-acid polypeptide reads, in one-letter code: MTVYHFVGIKGTGMSSLAQILHDMKHTVQGSDYEKRFFTQTALEKRSISILPFDKSNVKEGQVIIAGNAFPDTHEEIVAAKELNIPVHRYHHFLGDLMNQYTSVAVTGAHGKTSTTGLLAHVMQGAHPTSYLIGDGTGHGVENSKYFVFEACEYRRHFLSYNPDYAIMTNIDFDHPDYFTDINDVFSAFQEMALQVKKGIIACGDDEELQKIQAKVPVIFYGFGEDNDFQARNIQKRTDGTIFDVFVRNTYYDTFKITGYGNHSVLNALAVIALCHYENVDVEAVKHQLTTFEGVKRRFNEKPMGEQVIIDDYAHHPTEINATIEAARQKHPEREIVAVFQPHTFSRTEKFLDEFAESLSKADQVYLCDIFGSARENKGELTIEDLQKRIDGAELITDTTTDVLKKHKNGVLIFMGAGDIQKFEAAYVKEVQVAEK.

108-114 (GAHGKTS) provides a ligand contact to ATP.

This sequence belongs to the MurCDEF family.

It is found in the cytoplasm. The enzyme catalyses UDP-N-acetyl-alpha-D-muramate + L-alanine + ATP = UDP-N-acetyl-alpha-D-muramoyl-L-alanine + ADP + phosphate + H(+). Its pathway is cell wall biogenesis; peptidoglycan biosynthesis. Its function is as follows. Cell wall formation. This Bacillus cereus (strain AH187) protein is UDP-N-acetylmuramate--L-alanine ligase.